Reading from the N-terminus, the 370-residue chain is Phospho-N-acetylmuramoyl-pentapeptide-transferase (370 aa).

Transmembrane regions (helical) follow at residues 24–44 (YLTFRSGMAMLTAYIVAVAMG), 78–98 (TMGGFMILAGLFVAALLWADL), 103–123 (VWVVLLITGSYGLLGFMDDYA), 138–158 (KLVAQFIVAIIATVILILFAP), 177–197 (ALVINLGWFYVAFAAFTIAGF), 209–229 (GLAIVPVMFAASTFGLIAYLV), 245–265 (GVGELAVLCGAIIGGGMGFLW), 273–293 (IFMGDTGSLALGGALGAIAVC), 298–318 (LVLGIVGGLFVAEALSVMIQV), and 347–367 (TVVIRFWIVSMILAFIGLATL).

The protein belongs to the glycosyltransferase 4 family. MraY subfamily. Mg(2+) serves as cofactor.

It localises to the cell inner membrane. It carries out the reaction UDP-N-acetyl-alpha-D-muramoyl-L-alanyl-gamma-D-glutamyl-meso-2,6-diaminopimeloyl-D-alanyl-D-alanine + di-trans,octa-cis-undecaprenyl phosphate = di-trans,octa-cis-undecaprenyl diphospho-N-acetyl-alpha-D-muramoyl-L-alanyl-D-glutamyl-meso-2,6-diaminopimeloyl-D-alanyl-D-alanine + UMP. The protein operates within cell wall biogenesis; peptidoglycan biosynthesis. Catalyzes the initial step of the lipid cycle reactions in the biosynthesis of the cell wall peptidoglycan: transfers peptidoglycan precursor phospho-MurNAc-pentapeptide from UDP-MurNAc-pentapeptide onto the lipid carrier undecaprenyl phosphate, yielding undecaprenyl-pyrophosphoryl-MurNAc-pentapeptide, known as lipid I. This is Phospho-N-acetylmuramoyl-pentapeptide-transferase from Caulobacter vibrioides (strain NA1000 / CB15N) (Caulobacter crescentus).